The sequence spans 162 residues: Lipoprotein signal peptidase (162 aa).

The next 2 helical transmembrane spans lie at 56-76 (FLPPTGLLFLTLAISAGVVWY) and 84-104 (SPLFLTAFGLILGGGIGNLID). Active-site residues include Asp113 and Asp139. The chain crosses the membrane as a helical span at residues 132–152 (WPIFNVADSCITIGACMIVLF).

The protein belongs to the peptidase A8 family.

Its subcellular location is the cell inner membrane. The enzyme catalyses Release of signal peptides from bacterial membrane prolipoproteins. Hydrolyzes -Xaa-Yaa-Zaa-|-(S,diacylglyceryl)Cys-, in which Xaa is hydrophobic (preferably Leu), and Yaa (Ala or Ser) and Zaa (Gly or Ala) have small, neutral side chains.. It participates in protein modification; lipoprotein biosynthesis (signal peptide cleavage). Functionally, this protein specifically catalyzes the removal of signal peptides from prolipoproteins. The sequence is that of Lipoprotein signal peptidase from Chlorobaculum tepidum (strain ATCC 49652 / DSM 12025 / NBRC 103806 / TLS) (Chlorobium tepidum).